The chain runs to 1430 residues: Target of rapamycin complex 2 subunit TSC11 (1430 aa).

A disordered region spans residues Met-1 to Asn-62. Polar residues-rich tracts occupy residues Ala-7–Leu-26 and Asn-35–Lys-44. Residue Ser-19 is modified to Phosphoserine. Low complexity predominate over residues Asn-45–Glu-57. Phosphoserine is present on residues Ser-81, Ser-84, Ser-87, and Ser-141. Residues Ala-91–Gln-180 are a coiled coil. A disordered region spans residues Asp-182–Leu-285. The segment covering Thr-233–Ser-265 has biased composition (polar residues). An N-terminal Ras-GEF domain is found at Ser-995 to His-1100.

Belongs to the RICTOR family. In terms of assembly, the target of rapamycin complex 2 (TORC2) is composed of at least AVO1, AVO2, BIT61, LST8, TOR2 and TSC11. TORC2 forms a homodimer. Contrary to TORC1, TORC2 does not bind to and is not sensitive to FKBP-rapamycin. TSC11 binds to the N-terminal HEAT repeat region in TOR2 and is required for TORC2 integrity by tethering AVO1 and AVO2 to the complex. Post-translationally, phosphorylated by TOR2; when part of TORC2.

It localises to the cell membrane. The protein localises to the vacuole membrane. Its function is as follows. Essential component of TORC2, which regulates cell cycle-dependent polarization of the actin-cytoskeleton and cell wall integrity. TORC2 controls polarity of the actin cytoskeleton, which is required for orienting the secretory pathway toward discrete growth sites, via the RHO1/PKC1/MAPK cell integrity pathway. TSC11 may exert its functions through two distinct mechanisms, one mediated by AVO1 and the other mediated by AVO2 and SLM1. In Saccharomyces cerevisiae (strain ATCC 204508 / S288c) (Baker's yeast), this protein is Target of rapamycin complex 2 subunit TSC11 (TSC11).